We begin with the raw amino-acid sequence, 298 residues long: Apolipoprotein E (298 aa).

The first 18 residues, 1–18, serve as a signal peptide directing secretion; that stretch reads MKVLWAALVVTLLAGCRA. 8 repeat units span residues 74-95, 96-117, 118-139, 140-161, 162-183, 184-204, 205-222, and 223-244. The interval 74-244 is 8 X 22 AA approximate tandem repeats; that stretch reads LLIEDTMKEV…RLEEVREQME (171 aa). Residue Met137 is modified to Methionine sulfoxide. Phosphoserine is present on Ser141. The tract at residues 152 to 162 is LDL and other lipoprotein receptors binding; the sequence is HPRKMKRRLQR. 156–159 is a heparin binding site; that stretch reads MKRR. 218 to 225 is a heparin binding site; sequence GEQMRGRL. A specificity for association with VLDL region spans residues 260–272; that stretch reads RLKSWFEPMMEDM.

This sequence belongs to the apolipoprotein A1/A4/E family. Homotetramer. May interact with ABCA1; functionally associated with ABCA1 in the biogenesis of HDLs. May interact with APP/A4 amyloid-beta peptide; the interaction is extremely stable in vitro but its physiological significance is unclear. May interact with MAPT. May interact with MAP2. In the cerebrospinal fluid, interacts with secreted SORL1. Interacts with PMEL; this allows the loading of PMEL luminal fragment on ILVs to induce fibril nucleation. Post-translationally, APOE exists as multiple glycosylated and sialylated glycoforms within cells and in plasma. The extent of glycosylation and sialylation are tissue and context specific. In terms of processing, glycated in plasma VLDL. Phosphorylated by FAM20C in the extracellular medium.

The protein localises to the secreted. It localises to the extracellular space. It is found in the extracellular matrix. Its subcellular location is the extracellular vesicle. The protein resides in the endosome. The protein localises to the multivesicular body. Its function is as follows. APOE is an apolipoprotein, a protein associating with lipid particles, that mainly functions in lipoprotein-mediated lipid transport between organs via the plasma and interstitial fluids. APOE is a core component of plasma lipoproteins and is involved in their production, conversion and clearance. Apolipoproteins are amphipathic molecules that interact both with lipids of the lipoprotein particle core and the aqueous environment of the plasma. As such, APOE associates with chylomicrons, chylomicron remnants, very low density lipoproteins (VLDL) and intermediate density lipoproteins (IDL) but shows a preferential binding to high-density lipoproteins (HDL). It also binds a wide range of cellular receptors including the LDL receptor/LDLR and the very low-density lipoprotein receptor/VLDLR that mediate the cellular uptake of the APOE-containing lipoprotein particles. Finally, APOE also has a heparin-binding activity and binds heparan-sulfate proteoglycans on the surface of cells, a property that supports the capture and the receptor-mediated uptake of APOE-containing lipoproteins by cells. In Cavia porcellus (Guinea pig), this protein is Apolipoprotein E (APOE).